A 347-amino-acid polypeptide reads, in one-letter code: 4-hydroxy-2-oxovalerate aldolase (347 aa).

The 251-residue stretch at 2–252 (ILISDATLRD…DTRTTFERVM (251 aa)) folds into the Pyruvate carboxyltransferase domain. Residue 10–11 (RD) coordinates substrate. Mn(2+) is bound at residue D11. H14 acts as the Proton acceptor in catalysis. Residues S164 and H191 each coordinate substrate. Mn(2+) contacts are provided by H191 and H193.

Belongs to the 4-hydroxy-2-oxovalerate aldolase family.

It catalyses the reaction (S)-4-hydroxy-2-oxopentanoate = acetaldehyde + pyruvate. The sequence is that of 4-hydroxy-2-oxovalerate aldolase (mhpE) from Burkholderia pseudomallei (strain K96243).